Consider the following 459-residue polypeptide: Probable D-serine dehydratase (459 aa).

K119 carries the post-translational modification N6-(pyridoxal phosphate)lysine.

It belongs to the serine/threonine dehydratase family. DsdA subfamily. Pyridoxal 5'-phosphate serves as cofactor.

The enzyme catalyses D-serine = pyruvate + NH4(+). The chain is Probable D-serine dehydratase from Geobacillus stearothermophilus (Bacillus stearothermophilus).